Consider the following 315-residue polypeptide: Glutaminase (315 aa).

Positions 70, 120, 166, 173, 197, 249, and 267 each coordinate substrate.

Belongs to the glutaminase family. Homotetramer.

The enzyme catalyses L-glutamine + H2O = L-glutamate + NH4(+). This Sinorhizobium fredii (strain NBRC 101917 / NGR234) protein is Glutaminase.